Here is a 478-residue protein sequence, read N- to C-terminus: Stromelysin-1 (478 aa).

An N-terminal signal peptide occupies residues 1 to 17; that stretch reads MKTLPTLLLLCVALCSA. Positions 18–100 are cleaved as a propeptide — activation peptide; it reads YPLDGASRDA…PRCGVPDVGH (83 aa). The Cysteine switch signature appears at 91–98; the sequence is PRCGVPDV. C93 serves as a coordination point for Zn(2+). Residues D125 and D159 each coordinate Ca(2+). H169 and D171 together coordinate Zn(2+). D176, G177, G179, and V181 together coordinate Ca(2+). H184 contributes to the Zn(2+) binding site. Ca(2+) is bound by residues G191, N193, and D195. Zn(2+) is bound at residue H197. D199, D200, and E202 together coordinate Ca(2+). H219 serves as a coordination point for Zn(2+). E220 is a catalytic residue. Zn(2+) is bound by residues H223 and H229. Hemopexin repeat units follow at residues 288–337, 338–384, 386–434, and 435–478; these read PVMC…WPSL, PSAV…GFPS, IRKI…FPGI, and NPKI…WFQC. C291 and C478 are oxidised to a cystine. D298 serves as a coordination point for Ca(2+). Ca(2+) is bound by residues D390 and D439.

The protein belongs to the peptidase M10A family. Ca(2+) is required as a cofactor. It depends on Zn(2+) as a cofactor.

Its subcellular location is the secreted. It is found in the extracellular space. The protein resides in the extracellular matrix. It catalyses the reaction Preferential cleavage where P1', P2' and P3' are hydrophobic residues.. Metalloproteinase with a rather broad substrate specificity that can degrade fibronectin, laminin, gelatins of type I, III, IV, and V; collagens III, IV, X, and IX, and cartilage proteoglycans. Activates different molecules including growth factors, plasminogen or other matrix metalloproteinases such as MMP9. Once released into the extracellular matrix (ECM), the inactive pro-enzyme is activated by the plasmin cascade signaling pathway. Also acts intracellularly. For example, in dopaminergic neurons, gets activated by the serine protease HTRA2 upon stress and plays a pivotal role in DA neuronal degeneration by mediating microglial activation and alpha-synuclein/SNCA cleavage. In addition, plays a role in immune response and possesses antiviral activity against various viruses. Mechanistically, translocates from the cytoplasm into the cell nucleus upon virus infection to influence NF-kappa-B activities. In Oryctolagus cuniculus (Rabbit), this protein is Stromelysin-1 (MMP3).